The following is a 225-amino-acid chain: Germin-like protein 8-6 (225 aa).

Residues methionine 1 to alanine 23 form the signal peptide. A disulfide bridge links cysteine 33 with cysteine 48. Positions alanine 63 to aspartate 213 constitute a Cupin type-1 domain. Asparagine 77 carries N-linked (GlcNAc...) asparagine glycosylation. Positions 110, 112, and 117 each coordinate Mn(2+). N-linked (GlcNAc...) asparagine glycosylation is present at asparagine 136. Mn(2+) is bound at residue histidine 158.

This sequence belongs to the germin family. As to quaternary structure, oligomer (believed to be a pentamer but probably hexamer).

The protein resides in the secreted. Its subcellular location is the extracellular space. The protein localises to the apoplast. Functionally, plays a role in broad-spectrum disease resistance. Probably has no oxalate oxidase activity even if the active site is conserved. The chain is Germin-like protein 8-6 from Oryza sativa subsp. japonica (Rice).